A 327-amino-acid chain; its full sequence is Zinc transport protein ZntB (327 aa).

The Cytoplasmic portion of the chain corresponds to M1–M273. Residues A274–I294 traverse the membrane as a helical segment. At P295–H300 the chain is on the periplasmic side. A helical transmembrane segment spans residues L301–L321. At H322–L327 the chain is on the cytoplasmic side.

The protein belongs to the CorA metal ion transporter (MIT) (TC 1.A.35) family.

The protein resides in the cell inner membrane. It carries out the reaction Zn(2+)(out) + H(+)(out) = Zn(2+)(in) + H(+)(in). Its function is as follows. Zinc transporter. Acts as a Zn(2+):proton symporter, which likely mediates zinc ion uptake. The polypeptide is Zinc transport protein ZntB (Klebsiella pneumoniae subsp. pneumoniae (strain ATCC 700721 / MGH 78578)).